Here is a 394-residue protein sequence, read N- to C-terminus: Elongation factor Tu (394 aa).

A tr-type G domain is found at 10-204; sequence KPHVNVGTIG…ALDSYIPEPE (195 aa). Residues 19–26 are G1; sequence GHVDHGKT. 19–26 serves as a coordination point for GTP; that stretch reads GHVDHGKT. Position 26 (Thr-26) interacts with Mg(2+). The interval 60-64 is G2; the sequence is GITIA. Residues 81–84 form a G3 region; that stretch reads DCPG. Residues 81 to 85 and 136 to 139 each bind GTP; these read DCPGH and NKCD. Residues 136-139 are G4; that stretch reads NKCD. Positions 174 to 176 are G5; it reads SAL.

The protein belongs to the TRAFAC class translation factor GTPase superfamily. Classic translation factor GTPase family. EF-Tu/EF-1A subfamily. Monomer.

Its subcellular location is the cytoplasm. The enzyme catalyses GTP + H2O = GDP + phosphate + H(+). Functionally, GTP hydrolase that promotes the GTP-dependent binding of aminoacyl-tRNA to the A-site of ribosomes during protein biosynthesis. The sequence is that of Elongation factor Tu from Vibrio campbellii (strain ATCC BAA-1116).